Reading from the N-terminus, the 153-residue chain is Catabolic 3-dehydroquinase (153 aa).

Y24 functions as the Proton acceptor in the catalytic mechanism. N75, H81, and D88 together coordinate substrate. The Proton donor role is filled by H101. Substrate-binding positions include 102–103 (VS) and R112.

This sequence belongs to the type-II 3-dehydroquinase family. As to quaternary structure, homododecamer. Adopts a ring-like structure, composed of an arrangement of two hexameric rings stacked on top of one another.

The catalysed reaction is 3-dehydroquinate = 3-dehydroshikimate + H2O. It functions in the pathway aromatic compound metabolism; 3,4-dihydroxybenzoate biosynthesis; 3,4-dihydroxybenzoate from 3-dehydroquinate: step 1/2. In terms of biological role, is involved in the catabolism of quinate. Allows the utilization of quinate as carbon source via the beta-ketoadipate pathway. This chain is Catabolic 3-dehydroquinase, found in Aspergillus oryzae (strain ATCC 42149 / RIB 40) (Yellow koji mold).